The primary structure comprises 474 residues: Dihydrolipoyl dehydrogenase (474 aa).

FAD is bound by residues 34 to 51 (EGNPYDDPKGEARLGGTC), lysine 60, and glycine 124. A disulfide bond links cysteine 51 and cysteine 56. NAD(+)-binding positions include 189 to 193 (GAGVI), glutamate 212, valine 246, and 278 to 281 (SVGR). Aspartate 321 and alanine 329 together coordinate FAD. Histidine 453 acts as the Proton acceptor in catalysis.

This sequence belongs to the class-I pyridine nucleotide-disulfide oxidoreductase family. It depends on FAD as a cofactor.

Its subcellular location is the cytoplasm. The catalysed reaction is N(6)-[(R)-dihydrolipoyl]-L-lysyl-[protein] + NAD(+) = N(6)-[(R)-lipoyl]-L-lysyl-[protein] + NADH + H(+). The branched-chain alpha-keto dehydrogenase complex catalyzes the overall conversion of alpha-keto acids to acyl-CoA and CO(2). It contains multiple copies of 3 enzymatic components: branched-chain alpha-keto acid decarboxylase (E1), lipoamide acyltransferase (E2) and lipoamide dehydrogenase (E3). In Cupriavidus necator (strain ATCC 17699 / DSM 428 / KCTC 22496 / NCIMB 10442 / H16 / Stanier 337) (Ralstonia eutropha), this protein is Dihydrolipoyl dehydrogenase (odhL).